Consider the following 610-residue polypeptide: Elongation factor 4 (610 aa).

The region spanning 11-193 (EKIRNFSIIA…QIVEKVPAPT (183 aa)) is the tr-type G domain. Residues 23 to 28 (DHGKST) and 140 to 143 (NKID) contribute to the GTP site.

It belongs to the TRAFAC class translation factor GTPase superfamily. Classic translation factor GTPase family. LepA subfamily.

It is found in the cell membrane. The catalysed reaction is GTP + H2O = GDP + phosphate + H(+). Its function is as follows. Required for accurate and efficient protein synthesis under certain stress conditions. May act as a fidelity factor of the translation reaction, by catalyzing a one-codon backward translocation of tRNAs on improperly translocated ribosomes. Back-translocation proceeds from a post-translocation (POST) complex to a pre-translocation (PRE) complex, thus giving elongation factor G a second chance to translocate the tRNAs correctly. Binds to ribosomes in a GTP-dependent manner. The polypeptide is Elongation factor 4 (Streptococcus agalactiae serotype Ia (strain ATCC 27591 / A909 / CDC SS700)).